A 37-amino-acid polypeptide reads, in one-letter code: Cytochrome b6-f complex subunit 5 (37 aa).

Residues 5 to 25 (LLCGIVLGLIPITLAGLFVAA) form a helical membrane-spanning segment.

Belongs to the PetG family. As to quaternary structure, the 4 large subunits of the cytochrome b6-f complex are cytochrome b6, subunit IV (17 kDa polypeptide, PetD), cytochrome f and the Rieske protein, while the 4 small subunits are PetG, PetL, PetM and PetN. The complex functions as a dimer.

It is found in the cellular thylakoid membrane. Its function is as follows. Component of the cytochrome b6-f complex, which mediates electron transfer between photosystem II (PSII) and photosystem I (PSI), cyclic electron flow around PSI, and state transitions. PetG is required for either the stability or assembly of the cytochrome b6-f complex. The polypeptide is Cytochrome b6-f complex subunit 5 (Cyanothece sp. (strain PCC 7425 / ATCC 29141)).